The sequence spans 190 residues: Putative 3-methyladenine DNA glycosylase (190 aa).

This sequence belongs to the DNA glycosylase MPG family.

This is Putative 3-methyladenine DNA glycosylase from Rubrobacter xylanophilus (strain DSM 9941 / JCM 11954 / NBRC 16129 / PRD-1).